A 260-amino-acid chain; its full sequence is UPF0246 protein BPSL1241 (260 aa).

It belongs to the UPF0246 family.

This chain is UPF0246 protein BPSL1241, found in Burkholderia pseudomallei (strain K96243).